The following is a 1390-amino-acid chain: DNA-directed RNA polymerase subunit beta'' (1390 aa).

The Zn(2+) site is built by Cys220, Cys291, Cys298, and Cys301.

Belongs to the RNA polymerase beta' chain family. RpoC2 subfamily. As to quaternary structure, in plastids the minimal PEP RNA polymerase catalytic core is composed of four subunits: alpha, beta, beta', and beta''. When a (nuclear-encoded) sigma factor is associated with the core the holoenzyme is formed, which can initiate transcription. Requires Zn(2+) as cofactor.

The protein resides in the plastid. It localises to the chloroplast. The enzyme catalyses RNA(n) + a ribonucleoside 5'-triphosphate = RNA(n+1) + diphosphate. Its function is as follows. DNA-dependent RNA polymerase catalyzes the transcription of DNA into RNA using the four ribonucleoside triphosphates as substrates. This chain is DNA-directed RNA polymerase subunit beta'', found in Populus alba (White poplar).